The sequence spans 241 residues: Uridylate kinase (241 aa).

Residue K15–G18 coordinates ATP. Positions G23–G28 are involved in allosteric activation by GTP. A UMP-binding site is contributed by G57. The ATP site is built by G58 and R62. UMP-binding positions include D77 and T138 to T145. ATP contacts are provided by T165, F171, and D174.

It belongs to the UMP kinase family. In terms of assembly, homohexamer.

The protein localises to the cytoplasm. It catalyses the reaction UMP + ATP = UDP + ADP. It participates in pyrimidine metabolism; CTP biosynthesis via de novo pathway; UDP from UMP (UMPK route): step 1/1. Its activity is regulated as follows. Allosterically activated by GTP. Inhibited by UTP. Functionally, catalyzes the reversible phosphorylation of UMP to UDP. The protein is Uridylate kinase of Vibrio vulnificus (strain CMCP6).